Reading from the N-terminus, the 72-residue chain is ATP synthase subunit c (72 aa).

Helical transmembrane passes span 5-25 (LLAA…IGIA) and 51-71 (AGLS…LLFV).

This sequence belongs to the ATPase C chain family. F-type ATPases have 2 components, F(1) - the catalytic core - and F(0) - the membrane proton channel. F(1) has five subunits: alpha(3), beta(3), gamma(1), delta(1), epsilon(1). F(0) has three main subunits: a(1), b(2) and c(10-14). The alpha and beta chains form an alternating ring which encloses part of the gamma chain. F(1) is attached to F(0) by a central stalk formed by the gamma and epsilon chains, while a peripheral stalk is formed by the delta and b chains.

It is found in the cell membrane. Functionally, f(1)F(0) ATP synthase produces ATP from ADP in the presence of a proton or sodium gradient. F-type ATPases consist of two structural domains, F(1) containing the extramembraneous catalytic core and F(0) containing the membrane proton channel, linked together by a central stalk and a peripheral stalk. During catalysis, ATP synthesis in the catalytic domain of F(1) is coupled via a rotary mechanism of the central stalk subunits to proton translocation. Its function is as follows. Key component of the F(0) channel; it plays a direct role in translocation across the membrane. A homomeric c-ring of between 10-14 subunits forms the central stalk rotor element with the F(1) delta and epsilon subunits. The polypeptide is ATP synthase subunit c (Clostridium perfringens (strain ATCC 13124 / DSM 756 / JCM 1290 / NCIMB 6125 / NCTC 8237 / Type A)).